A 579-amino-acid polypeptide reads, in one-letter code: Type II restriction enzyme FokI (579 aa).

Catalysis depends on residues aspartate 450, aspartate 467, and lysine 469.

Monomer, in which form it can cleave DNA. Homodimer when bound to DNA. Mg(2+) serves as cofactor.

The enzyme catalyses Endonucleolytic cleavage of DNA to give specific double-stranded fragments with terminal 5'-phosphates.. Its function is as follows. An S subtype restriction enzyme that recognizes the asymmetric double-stranded sequence 5'-GGATG-3' and cleaves respectively 14 bases after G-1 (top strand) and 13 bases before C-1 (bottom strand). The chain is Type II restriction enzyme FokI from Planomicrobium okeanokoites (Planococcus okeanokoites).